Consider the following 96-residue polypeptide: UPF0251 protein Ssed_3913 (96 aa).

This sequence belongs to the UPF0251 family.

The polypeptide is UPF0251 protein Ssed_3913 (Shewanella sediminis (strain HAW-EB3)).